A 202-amino-acid chain; its full sequence is Thymidylate kinase (202 aa).

Residue 7-14 (GIDGSGKT) participates in ATP binding.

This sequence belongs to the thymidylate kinase family.

The enzyme catalyses dTMP + ATP = dTDP + ADP. Phosphorylation of dTMP to form dTDP in both de novo and salvage pathways of dTTP synthesis. In Ehrlichia chaffeensis (strain ATCC CRL-10679 / Arkansas), this protein is Thymidylate kinase.